Here is a 169-residue protein sequence, read N- to C-terminus: MTALFAQSLVTPSVGLIFWKTVAFLIFLYILYRFGWGPITESLEEREEEIEHSIQRAEEALEEAKAIQAENEEARREAEQKAQQILREARDSAEELREEEKAKTRREIQEMKEQAQAEIEREKQAALQELRDEVADLAIEAAQKIIENDLDADRHRQLVDDALDDFPTN.

A helical membrane pass occupies residues 12-32 (PSVGLIFWKTVAFLIFLYILY). The interval 69–107 (AENEEARREAEQKAQQILREARDSAEELREEEKAKTRRE) is disordered. The segment covering 87–107 (REARDSAEELREEEKAKTRRE) has biased composition (basic and acidic residues).

This sequence belongs to the ATPase B chain family. F-type ATPases have 2 components, F(1) - the catalytic core - and F(0) - the membrane proton channel. F(1) has five subunits: alpha(3), beta(3), gamma(1), delta(1), epsilon(1). F(0) has three main subunits: a(1), b(2) and c(10-14). The alpha and beta chains form an alternating ring which encloses part of the gamma chain. F(1) is attached to F(0) by a central stalk formed by the gamma and epsilon chains, while a peripheral stalk is formed by the delta and b chains.

The protein resides in the cell inner membrane. F(1)F(0) ATP synthase produces ATP from ADP in the presence of a proton or sodium gradient. F-type ATPases consist of two structural domains, F(1) containing the extramembraneous catalytic core and F(0) containing the membrane proton channel, linked together by a central stalk and a peripheral stalk. During catalysis, ATP synthesis in the catalytic domain of F(1) is coupled via a rotary mechanism of the central stalk subunits to proton translocation. Its function is as follows. Component of the F(0) channel, it forms part of the peripheral stalk, linking F(1) to F(0). This chain is ATP synthase subunit b, found in Salinibacter ruber (strain DSM 13855 / M31).